Here is a 118-residue protein sequence, read N- to C-terminus: Small ribosomal subunit protein uS13 (118 aa).

The interval serine 94–lysine 118 is disordered.

The protein belongs to the universal ribosomal protein uS13 family. Part of the 30S ribosomal subunit. Forms a loose heterodimer with protein S19. Forms two bridges to the 50S subunit in the 70S ribosome.

Located at the top of the head of the 30S subunit, it contacts several helices of the 16S rRNA. In the 70S ribosome it contacts the 23S rRNA (bridge B1a) and protein L5 of the 50S subunit (bridge B1b), connecting the 2 subunits; these bridges are implicated in subunit movement. Contacts the tRNAs in the A and P-sites. In Shewanella sediminis (strain HAW-EB3), this protein is Small ribosomal subunit protein uS13.